Consider the following 423-residue polypeptide: T-box protein 2 (423 aa).

The T-box DNA-binding region spans 70–243 (LWQQFSQCGT…NNPFAKGFRD (174 aa)). Disordered stretches follow at residues 238–324 (AKGF…PLRS) and 384–423 (VEATSEDSEEAEKPEVKKEQKSVTPPKKGGFDVLDLLSKP). Polar residues predominate over residues 261 to 283 (DATQSPPGKTASLPTHSPHPSES). A compositionally biased stretch (low complexity) spans 302–317 (TPTTSSLSTSTTPTLS). Over residues 394-404 (AEKPEVKKEQK) the composition is skewed to basic and acidic residues.

Post-translationally, sumoylated. Expressed in body wall muscles and a subset of pharyngeal neurons. Expressed in head neurons and occassionally tail neurons. Not expressed in the pharynx.

It is found in the nucleus. Involved in the transcriptional regulation of genes required for the development of pharyngeal muscles derived from the ABa lineage. Acts as a transcriptional repressor and binds to T-box binding sites in its own promoter to negatively autoregulate its own expression in neurons, seam cells and the gut in order to restrict its expression to certain tissues. May function together with the nfya-1-NF-Y complex to repress its own expression. Plays a role in neural fate specification in the hermaphrodite-specific neuron (HSN)/PHB neuron lineage, acting in concert with homeobox protein egl-5 and the asymmetric cell division protein ham-1. The sequence is that of T-box protein 2 from Caenorhabditis elegans.